Reading from the N-terminus, the 50-residue chain is Phospholipase A2 trimorphin (50 aa).

Y28, G30, and G32 together coordinate Ca(2+). A disulfide bridge links C29 with C45. Residue H48 is part of the active site. D49 is a Ca(2+) binding site.

The cofactor is Ca(2+). As to expression, expressed by the venom gland.

The protein resides in the secreted. The catalysed reaction is a 1,2-diacyl-sn-glycero-3-phosphocholine + H2O = a 1-acyl-sn-glycero-3-phosphocholine + a fatty acid + H(+). Its activity is regulated as follows. Inhibited by EDTA. Its function is as follows. PLA2 catalyzes the calcium-dependent hydrolysis of the 2-acyl groups in 3-sn-phosphoglycerides. The chain is Phospholipase A2 trimorphin from Trimorphodon lambda (Sonoran lyre snake).